A 455-amino-acid chain; its full sequence is D-inositol 3-phosphate glycosyltransferase (455 aa).

The tract at residues 1-25 (MSQHVSRLGGLRGRSHGHGAFGGPY) is disordered. H45 serves as a coordination point for 1D-myo-inositol 3-phosphate. UDP-N-acetyl-alpha-D-glucosamine is bound by residues 51–52 (QP) and G59. 1D-myo-inositol 3-phosphate-binding positions include 56-61 (DAGGMN), K114, Y147, T171, and R191. Positions 266 and 271 each coordinate UDP-N-acetyl-alpha-D-glucosamine. Residues Y341, R342, and A344 each coordinate Mg(2+). Residues E354 and E362 each contribute to the UDP-N-acetyl-alpha-D-glucosamine site. T368 is a binding site for Mg(2+).

This sequence belongs to the glycosyltransferase group 1 family. MshA subfamily. In terms of assembly, homodimer.

It carries out the reaction 1D-myo-inositol 3-phosphate + UDP-N-acetyl-alpha-D-glucosamine = 1D-myo-inositol 2-acetamido-2-deoxy-alpha-D-glucopyranoside 3-phosphate + UDP + H(+). Functionally, catalyzes the transfer of a N-acetyl-glucosamine moiety to 1D-myo-inositol 3-phosphate to produce 1D-myo-inositol 2-acetamido-2-deoxy-glucopyranoside 3-phosphate in the mycothiol biosynthesis pathway. This chain is D-inositol 3-phosphate glycosyltransferase, found in Streptomyces bingchenggensis (strain BCW-1).